The following is a 390-amino-acid chain: Bifunctional enzyme IspD/IspF (390 aa).

Positions 1 to 229 are 2-C-methyl-D-erythritol 4-phosphate cytidylyltransferase; sequence MAAGRGERAG…RQDHAVFPDI (229 aa). The tract at residues 230-390 is 2-C-methyl-D-erythritol 2,4-cyclodiphosphate synthase; it reads RTGNGYDVHS…TVIYPGEVPE (161 aa). Asp236 and His238 together coordinate a divalent metal cation. Residues 236–238 and 262–263 each bind 4-CDP-2-C-methyl-D-erythritol 2-phosphate; these read DVH and HS. His270 is an a divalent metal cation binding site. 4-CDP-2-C-methyl-D-erythritol 2-phosphate-binding positions include 284–286, 360–363, Phe367, and Arg370; these read DIG and TTNE.

In the N-terminal section; belongs to the IspD/TarI cytidylyltransferase family. IspD subfamily. The protein in the C-terminal section; belongs to the IspF family. A divalent metal cation is required as a cofactor.

The enzyme catalyses 2-C-methyl-D-erythritol 4-phosphate + CTP + H(+) = 4-CDP-2-C-methyl-D-erythritol + diphosphate. It carries out the reaction 4-CDP-2-C-methyl-D-erythritol 2-phosphate = 2-C-methyl-D-erythritol 2,4-cyclic diphosphate + CMP. It participates in isoprenoid biosynthesis; isopentenyl diphosphate biosynthesis via DXP pathway; isopentenyl diphosphate from 1-deoxy-D-xylulose 5-phosphate: step 2/6. It functions in the pathway isoprenoid biosynthesis; isopentenyl diphosphate biosynthesis via DXP pathway; isopentenyl diphosphate from 1-deoxy-D-xylulose 5-phosphate: step 4/6. In terms of biological role, bifunctional enzyme that catalyzes the formation of 4-diphosphocytidyl-2-C-methyl-D-erythritol from CTP and 2-C-methyl-D-erythritol 4-phosphate (MEP) (IspD), and catalyzes the conversion of 4-diphosphocytidyl-2-C-methyl-D-erythritol 2-phosphate (CDP-ME2P) to 2-C-methyl-D-erythritol 2,4-cyclodiphosphate (ME-CPP) with a corresponding release of cytidine 5-monophosphate (CMP) (IspF). This is Bifunctional enzyme IspD/IspF from Brucella suis biovar 1 (strain 1330).